Here is a 435-residue protein sequence, read N- to C-terminus: Beta-arrestin arr-1 (435 aa).

The tract at residues 358–382 (LTHSKPPESPERTDRGLPSIEATNG) is disordered. Over residues 362 to 372 (KPPESPERTDR) the composition is skewed to basic and acidic residues. Positions 390 to 394 (LIQLH) match the Clathrin box motif. The [DE]-X(1,2)-F-X-X-[FL]-X-X-X-R motif signature appears at 404–414 (DLIFEDFARMR). The interval 416–435 (HGNDSEDQPSPSANLPPSLL) is disordered. Over residues 424–435 (PSPSANLPPSLL) the composition is skewed to low complexity.

Belongs to the arrestin family. Component of a complex composed of arr-1, daf-18 and mpz-1. Within the complex, interacts (via C-terminus) with mpz-1 (via PDZ domain) and phosphatase daf-18. May interact (via C-terminus) with clathrin chc-1 and beta-2 adaptin (AP2) apb-1. Expressed in head neurons, nerve ring and ventral nerve cord (at protein level). Expressed in the nervous system including the nerve ring and the ventral and dorsal nerve cords. Highly expressed in amphid chemosensory neurons AWA, AWB, AWC, ADL and ASH, and in hermaphrodite specific neuron HSN. Also expressed in the intestine.

The protein resides in the perikaryon. It localises to the cell projection. Its subcellular location is the dendrite. Adapter protein required for olfactory adaptation and recovery to volatile odorants, probably by desensitization of G-protein coupled receptors (GPCR). May play a role in clathrin-mediated GPCR endocytosis. Acts as a positive regulator of insulin-like daf-2 signaling pathway probably by forming a complex with mpz-1 and phosphatase daf-18 likely resulting in daf-18 inhibition. Involved in egg-laying. The protein is Beta-arrestin arr-1 of Caenorhabditis elegans.